The sequence spans 282 residues: Deoxyribonuclease-1 (282 aa).

The first 22 residues, 1–22 (MRGTRLMGLLLALAGLLQLGLS), serve as a signal peptide directing secretion. The N-linked (GlcNAc...) asparagine glycan is linked to Asn-40. Glu-100 is an active-site residue. A disulfide bridge connects residues Cys-123 and Cys-126. His-156 is an active-site residue. Cysteines 195 and 231 form a disulfide.

Belongs to the DNase I family. Ca(2+) is required as a cofactor. The cofactor is Mg(2+). Post-translationally, the only differences between the A and B forms and the C and D forms are in the compositions of the carbohydrate bound to Asn-40.

It localises to the secreted. The protein resides in the zymogen granule. The protein localises to the nucleus envelope. The enzyme catalyses Endonucleolytic cleavage to 5'-phosphodinucleotide and 5'-phosphooligonucleotide end-products.. Functionally, serum endocuclease secreted into body fluids by a wide variety of exocrine and endocrine organs. Expressed by non-hematopoietic tissues and preferentially cleaves protein-free DNA. Among other functions, seems to be involved in cell death by apoptosis. Binds specifically to G-actin and blocks actin polymerization. Together with DNASE1L3, plays a key role in degrading neutrophil extracellular traps (NETs). NETs are mainly composed of DNA fibers and are released by neutrophils to bind pathogens during inflammation. Degradation of intravascular NETs by DNASE1 and DNASE1L3 is required to prevent formation of clots that obstruct blood vessels and cause organ damage following inflammation. The polypeptide is Deoxyribonuclease-1 (DNASE1) (Bos taurus (Bovine)).